A 42-amino-acid chain; its full sequence is Tachystatin-B1 (42 aa).

Intrachain disulfides connect cysteine 4-cysteine 20, cysteine 11-cysteine 25, and cysteine 19-cysteine 37.

In terms of tissue distribution, granular hemocytes, small secretory granules.

Its subcellular location is the secreted. Exhibits stronger antimicrobial activity against the Gram-positive bacteria (S.aureus (IC(50) is 7.4 ug/ml)) and fungi (C.albicans (IC(50) is 3.0 ug/ml) and P.pastoris (IC(50) is 0.1 ug/ml)) than Gram-negative bacteria (E.coli no inhibition at 100 ug/ml). Binds to chitin (4.3 uM are required to obtain 50% of binding). Does not cause hemolysis on sheep erythrocytes. Has no blocking activity on the P-type calcium channel. This is Tachystatin-B1 from Tachypleus tridentatus (Japanese horseshoe crab).